Reading from the N-terminus, the 438-residue chain is 23S rRNA (uracil(1939)-C(5))-methyltransferase RlmD (438 aa).

The 59-residue stretch at 11–69 (LQPESKHQQVLVEKLDHQGAGIAYLNKKPLFIDGTLPGEEVVTQLTESKSKFARGKLIK) folds into the TRAM domain. 4 residues coordinate [4Fe-4S] cluster: Cys82, Cys88, Cys91, and Cys169. Positions 272, 301, 306, 322, 349, and 370 each coordinate S-adenosyl-L-methionine. Cys396 (nucleophile) is an active-site residue.

The protein belongs to the class I-like SAM-binding methyltransferase superfamily. RNA M5U methyltransferase family. RlmD subfamily.

It catalyses the reaction uridine(1939) in 23S rRNA + S-adenosyl-L-methionine = 5-methyluridine(1939) in 23S rRNA + S-adenosyl-L-homocysteine + H(+). Functionally, catalyzes the formation of 5-methyl-uridine at position 1939 (m5U1939) in 23S rRNA. This Vibrio vulnificus (strain YJ016) protein is 23S rRNA (uracil(1939)-C(5))-methyltransferase RlmD.